Consider the following 181-residue polypeptide: ATP synthase subunit delta (181 aa).

The protein belongs to the ATPase delta chain family. As to quaternary structure, F-type ATPases have 2 components, F(1) - the catalytic core - and F(0) - the membrane proton channel. F(1) has five subunits: alpha(3), beta(3), gamma(1), delta(1), epsilon(1). F(0) has three main subunits: a(1), b(2) and c(10-14). The alpha and beta chains form an alternating ring which encloses part of the gamma chain. F(1) is attached to F(0) by a central stalk formed by the gamma and epsilon chains, while a peripheral stalk is formed by the delta and b chains.

The protein localises to the cell inner membrane. Functionally, f(1)F(0) ATP synthase produces ATP from ADP in the presence of a proton or sodium gradient. F-type ATPases consist of two structural domains, F(1) containing the extramembraneous catalytic core and F(0) containing the membrane proton channel, linked together by a central stalk and a peripheral stalk. During catalysis, ATP synthesis in the catalytic domain of F(1) is coupled via a rotary mechanism of the central stalk subunits to proton translocation. This protein is part of the stalk that links CF(0) to CF(1). It either transmits conformational changes from CF(0) to CF(1) or is implicated in proton conduction. This is ATP synthase subunit delta from Chlorobaculum tepidum (strain ATCC 49652 / DSM 12025 / NBRC 103806 / TLS) (Chlorobium tepidum).